A 347-amino-acid chain; its full sequence is MNPIIFIIILLTIMLGTIIVMISSHWLLVWIGFEMNMLAIIPIMMKNHNPRATEASTKYFLTQSTASMLLMMAVIINLMFSGQWTVMKLFNPMASMLMTMALAMKLGMAPFHFWVPEVTQGIPLSSGLILLTWQKLAPMSVLYQIFPSINLNLILTLSVLSILIGGWGGLNQTQLRKIMAYSSIAHMGWMTAVLPYNPTMTLLNLIIYIIMTSTMFTMFMANSTTTTLSLSHTWNKTPIMTVLILATLLSMGGLPPLSGFMPKWMIIQEMTKNNSIILPTFMAITALLNLYFYMRLTYSTTLTMFPSTNNMKMKWQFPLMKKMTFLPTMVVLSTMMLPLTPMLSVLE.

11 helical membrane-spanning segments follow: residues 3-23, 25-45, 67-87, 96-116, 122-142, 145-165, 178-198, 200-220, 239-259, 274-294, and 325-345; these read PIIF…VMIS, HWLL…PIMM, SMLL…WTVM, MLMT…FWVP, IPLS…MSVL, IFPS…ILIG, IMAY…PYNP, MTLL…TMFM, IMTV…PLSG, NSII…YFYM, and FLPT…MLSV.

Belongs to the complex I subunit 2 family. In terms of assembly, core subunit of respiratory chain NADH dehydrogenase (Complex I) which is composed of 45 different subunits. Interacts with TMEM242.

The protein resides in the mitochondrion inner membrane. It catalyses the reaction a ubiquinone + NADH + 5 H(+)(in) = a ubiquinol + NAD(+) + 4 H(+)(out). In terms of biological role, core subunit of the mitochondrial membrane respiratory chain NADH dehydrogenase (Complex I) which catalyzes electron transfer from NADH through the respiratory chain, using ubiquinone as an electron acceptor. Essential for the catalytic activity and assembly of complex I. This chain is NADH-ubiquinone oxidoreductase chain 2, found in Bos indicus (Zebu).